We begin with the raw amino-acid sequence, 292 residues long: 2-dehydro-3-deoxygalactonokinase (292 aa).

The protein belongs to the DgoK family.

The enzyme catalyses 2-dehydro-3-deoxy-D-galactonate + ATP = 2-dehydro-3-deoxy-6-phospho-D-galactonate + ADP + H(+). It participates in carbohydrate acid metabolism; D-galactonate degradation; D-glyceraldehyde 3-phosphate and pyruvate from D-galactonate: step 2/3. The protein is 2-dehydro-3-deoxygalactonokinase (dgoK) of Escherichia coli (strain K12).